A 351-amino-acid chain; its full sequence is DNA nickase (351 aa).

Residues histidine 241, glutamate 245, and histidine 303 each coordinate Fe cation.

Its function is as follows. Acts as a DNA nickase. This chain is DNA nickase, found in Nostoc sp. (strain PCC 7120 / SAG 25.82 / UTEX 2576).